The primary structure comprises 359 residues: Fructose-bisphosphate aldolase, cytoplasmic isozyme 2 (359 aa).

Arg52 and Lys143 together coordinate substrate. Catalysis depends on Glu184, which acts as the Proton acceptor. Lys226 acts as the Schiff-base intermediate with dihydroxyacetone-P in catalysis.

Belongs to the class I fructose-bisphosphate aldolase family.

Its subcellular location is the cytoplasm. It catalyses the reaction beta-D-fructose 1,6-bisphosphate = D-glyceraldehyde 3-phosphate + dihydroxyacetone phosphate. It functions in the pathway carbohydrate degradation; glycolysis; D-glyceraldehyde 3-phosphate and glycerone phosphate from D-glucose: step 4/4. This chain is Fructose-bisphosphate aldolase, cytoplasmic isozyme 2, found in Pisum sativum (Garden pea).